Here is a 193-residue protein sequence, read N- to C-terminus: Calcium-binding protein E63-1 (193 aa).

4 consecutive EF-hand domains span residues Val-35–Asn-70, Val-71–Leu-106, Asp-127–Pro-162, and Leu-163–Leu-193. Residues Asp-48, Asn-50, Asp-52, Arg-54, and Glu-59 each coordinate Ca(2+). Residues Asp-140, Asp-142, Asn-144, Glu-151, Asp-176, Asp-178, Asp-180, Arg-182, and Glu-187 each coordinate Ca(2+).

The protein is Calcium-binding protein E63-1 (Eip63F-1) of Drosophila melanogaster (Fruit fly).